The following is a 247-amino-acid chain: ATP synthase subunit a, chloroplastic (247 aa).

The next 5 helical transmembrane spans lie at 38-58 (QVLI…IIAV), 95-115 (VPFI…GALL), 134-154 (INTT…AGLS), 199-219 (LVVV…VMFL), and 220-240 (GLFT…AYIG).

The protein belongs to the ATPase A chain family. F-type ATPases have 2 components, CF(1) - the catalytic core - and CF(0) - the membrane proton channel. CF(1) has five subunits: alpha(3), beta(3), gamma(1), delta(1), epsilon(1). CF(0) has four main subunits: a, b, b' and c.

Its subcellular location is the plastid. It localises to the chloroplast thylakoid membrane. Functionally, key component of the proton channel; it plays a direct role in the translocation of protons across the membrane. The chain is ATP synthase subunit a, chloroplastic from Cucumis sativus (Cucumber).